A 401-amino-acid polypeptide reads, in one-letter code: Phosrestin-1 (401 aa).

Belongs to the arrestin family.

Directly interacts with light-activated rhodopsin thereby activating the phosphorylation of metarhodopsin. Inhibits the dephosphorylation of metarhodopsin. The chain is Phosrestin-1 (ARR2) from Calliphora vicina (Blue blowfly).